The chain runs to 220 residues: Small ribosomal subunit protein uS3 (220 aa).

Residues 38–106 (IRKYVKGRLK…RVHININEIK (69 aa)) enclose the KH type-2 domain.

This sequence belongs to the universal ribosomal protein uS3 family. Part of the 30S ribosomal subunit. Forms a tight complex with proteins S10 and S14.

Its function is as follows. Binds the lower part of the 30S subunit head. Binds mRNA in the 70S ribosome, positioning it for translation. The chain is Small ribosomal subunit protein uS3 from Brevibacillus brevis (strain 47 / JCM 6285 / NBRC 100599).